A 548-amino-acid polypeptide reads, in one-letter code: Chaperonin GroEL (548 aa).

ATP contacts are provided by residues 30 to 33 (TLGP), Lys-51, 87 to 91 (DGTTT), Gly-415, 479 to 481 (NAA), and Asp-495. A disordered region spans residues 524–548 (LPKEDKSSDSSSSPAGGMGGMGGMM). Residues 539–548 (GGMGGMGGMM) show a composition bias toward gly residues.

This sequence belongs to the chaperonin (HSP60) family. As to quaternary structure, forms a cylinder of 14 subunits composed of two heptameric rings stacked back-to-back. Interacts with the co-chaperonin GroES.

It is found in the cytoplasm. The catalysed reaction is ATP + H2O + a folded polypeptide = ADP + phosphate + an unfolded polypeptide.. Functionally, together with its co-chaperonin GroES, plays an essential role in assisting protein folding. The GroEL-GroES system forms a nano-cage that allows encapsulation of the non-native substrate proteins and provides a physical environment optimized to promote and accelerate protein folding. The polypeptide is Chaperonin GroEL (Buchnera aphidicola subsp. Acyrthosiphon pisum (strain 5A)).